The primary structure comprises 331 residues: DNA polymerase III subunit delta (331 aa).

The protein belongs to the DNA polymerase HolA subunit family. As to quaternary structure, DNA polymerase III contains a core (composed of alpha, epsilon and theta chains) that associates with a tau subunit. This core dimerizes to form the POLIII' complex. PolIII' associates with the gamma complex (composed of gamma, delta, delta', psi and chi chains) and with the beta chain to form the complete DNA polymerase III complex.

It catalyses the reaction DNA(n) + a 2'-deoxyribonucleoside 5'-triphosphate = DNA(n+1) + diphosphate. DNA polymerase III is a complex, multichain enzyme responsible for most of the replicative synthesis in bacteria. This DNA polymerase also exhibits 3' to 5' exonuclease activity. The delta subunit seems to interact with the gamma subunit to transfer the beta subunit on the DNA. In Buchnera aphidicola subsp. Acyrthosiphon pisum (strain APS) (Acyrthosiphon pisum symbiotic bacterium), this protein is DNA polymerase III subunit delta (holA).